The sequence spans 484 residues: Malonate-semialdehyde dehydrogenase 1 (484 aa).

NAD(+) is bound by residues Phe154, Lys178, Glu181, Arg182, and Ser231. Cys286 functions as the Nucleophile in the catalytic mechanism. NAD(+) is bound at residue Glu384.

It belongs to the aldehyde dehydrogenase family. IolA subfamily. As to quaternary structure, homotetramer.

The enzyme catalyses 3-oxopropanoate + NAD(+) + CoA + H2O = hydrogencarbonate + acetyl-CoA + NADH + H(+). It catalyses the reaction 2-methyl-3-oxopropanoate + NAD(+) + CoA + H2O = propanoyl-CoA + hydrogencarbonate + NADH + H(+). It functions in the pathway polyol metabolism; myo-inositol degradation into acetyl-CoA; acetyl-CoA from myo-inositol: step 7/7. Functionally, catalyzes the oxidation of malonate semialdehyde (MSA) and methylmalonate semialdehyde (MMSA) into acetyl-CoA and propanoyl-CoA, respectively. Is involved in a myo-inositol catabolic pathway. Bicarbonate, and not CO2, is the end-product of the enzymatic reaction. This is Malonate-semialdehyde dehydrogenase 1 from Bacillus licheniformis (strain ATCC 14580 / DSM 13 / JCM 2505 / CCUG 7422 / NBRC 12200 / NCIMB 9375 / NCTC 10341 / NRRL NRS-1264 / Gibson 46).